Reading from the N-terminus, the 139-residue chain is Histone H2A (139 aa).

The segment at 1 to 27 (MSGKGKAGKSGGKAGSETKSMSRSSKA) is disordered. The residue at position 2 (Ser-2) is an N-acetylserine. N6-acetyllysine is present on residues Lys-9 and Lys-13. The span at 17–27 (ETKSMSRSSKA) shows a compositional bias: polar residues. Gln-110 bears the N5-methylglutamine mark. The interval 119 to 139 (PELLPSKSSKGKKDEGVSQEL) is disordered. Residues 129 to 139 (GKKDEGVSQEL) show a composition bias toward basic and acidic residues. A Phosphoserine modification is found at Ser-136. Positions 136-137 (SQ) match the [ST]-Q motif motif.

The protein belongs to the histone H2A family. As to quaternary structure, the nucleosome is a histone octamer containing two molecules each of H2A, H2B, H3 and H4 assembled in one H3-H4 heterotetramer and two H2A-H2B heterodimers. The octamer wraps approximately 147 bp of DNA. In terms of processing, phosphorylated to form H2AS128ph (gamma-H2A) in response to DNA double-strand breaks (DSBs) generated by exogenous genotoxic agents and by stalled replication forks. Phosphorylation is dependent on the DNA damage checkpoint kinases MEC1/ATR and TEL1/ATM, spreads on either side of a detected DSB site and may mark the surrounding chromatin for recruitment of proteins required for DNA damage signaling and repair. Gamma-H2A is removed from the DNA prior to the strand invasion-primer extension step of the repair process and subsequently dephosphorylated. Dephosphorylation is necessary for efficient recovery from the DNA damage checkpoint. Post-translationally, acetylated by ESA1 to form H2AK4ac and H2AK7ac.

The protein localises to the nucleus. The protein resides in the chromosome. Functionally, core component of nucleosome which plays a central role in DNA double strand break (DSB) repair. Nucleosomes wrap and compact DNA into chromatin, limiting DNA accessibility to the cellular machineries which require DNA as a template. Histones thereby play a central role in transcription regulation, DNA repair, DNA replication and chromosomal stability. DNA accessibility is regulated via a complex set of post-translational modifications of histones, also called histone code, and nucleosome remodeling. The sequence is that of Histone H2A from Agaricus bisporus (White button mushroom).